The sequence spans 321 residues: Protein FAM110C (321 aa).

Disordered stretches follow at residues 1 to 84 and 111 to 203; these read MRAL…APAP and RGSG…SQSD. 2 stretches are compositionally biased toward basic and acidic residues: residues 15 to 46 and 131 to 145; these read LLPR…DRAK and GKDK…DEGK. The span at 169 to 181 shows a compositional bias: low complexity; that stretch reads APAARSAAPSSVP. Ser241 carries the post-translational modification Phosphoserine.

It belongs to the FAM110 family. Interacts with AKT1; the interaction is transient and follows AKT1 activation. Interacts with PPP2CA and alpha-tubulin. In terms of tissue distribution, detected in stomach, thyroid, trachea, adrenal gland and testis, and at low levels in prostate, ovary, intestine, colon, spinal cord and lymph node.

The protein localises to the cytoplasm. It localises to the cytoskeleton. The protein resides in the microtubule organizing center. Its subcellular location is the centrosome. It is found in the spindle pole. The protein localises to the nucleus. In terms of biological role, may play a role in microtubule organization. May play a role in cell spreading and cell migration of epithelial cells; the function may involve the AKT1 signaling pathway. In Homo sapiens (Human), this protein is Protein FAM110C (FAM110C).